A 206-amino-acid polypeptide reads, in one-letter code: Small ribosomal subunit protein uS4 (206 aa).

Residues 96 to 156 (GRLDNVVYRM…EKAKKQSRVK (61 aa)) enclose the S4 RNA-binding domain.

Belongs to the universal ribosomal protein uS4 family. In terms of assembly, part of the 30S ribosomal subunit. Contacts protein S5. The interaction surface between S4 and S5 is involved in control of translational fidelity.

One of the primary rRNA binding proteins, it binds directly to 16S rRNA where it nucleates assembly of the body of the 30S subunit. Its function is as follows. With S5 and S12 plays an important role in translational accuracy. The chain is Small ribosomal subunit protein uS4 from Yersinia enterocolitica serotype O:8 / biotype 1B (strain NCTC 13174 / 8081).